The following is a 357-amino-acid chain: 3-isopropylmalate dehydrogenase (357 aa).

75–88 serves as a coordination point for NAD(+); it reads GPKWDTLPPAERPE. Positions 96, 106, 134, and 222 each coordinate substrate. Mg(2+) is bound by residues Asp-222, Asp-246, and Asp-250. Residue 279 to 291 participates in NAD(+) binding; the sequence is GSAPDIAGQQKAN.

The protein belongs to the isocitrate and isopropylmalate dehydrogenases family. LeuB type 1 subfamily. In terms of assembly, homodimer. The cofactor is Mg(2+). Mn(2+) serves as cofactor.

It localises to the cytoplasm. The enzyme catalyses (2R,3S)-3-isopropylmalate + NAD(+) = 4-methyl-2-oxopentanoate + CO2 + NADH. It participates in amino-acid biosynthesis; L-leucine biosynthesis; L-leucine from 3-methyl-2-oxobutanoate: step 3/4. In terms of biological role, catalyzes the oxidation of 3-carboxy-2-hydroxy-4-methylpentanoate (3-isopropylmalate) to 3-carboxy-4-methyl-2-oxopentanoate. The product decarboxylates to 4-methyl-2 oxopentanoate. The chain is 3-isopropylmalate dehydrogenase from Moorella thermoacetica (strain ATCC 39073 / JCM 9320).